The primary structure comprises 412 residues: Poly-beta-1,6-N-acetyl-D-glucosamine synthase (412 aa).

4 consecutive transmembrane segments (helical) span residues 7-28, 298-320, 332-354, and 364-386; these read LLFYPIFMSIYWIVGSIYYFFI, IASITWVYIVLCYLSFLVITANI, IFFFSSFTMTFINIIQFTVALFI, and VGLIFLSWYPTLYWVINAAVVIM.

The protein belongs to the glycosyltransferase 2 family.

The protein resides in the cell membrane. Functionally, N-acetylglucosaminyltransferase that catalyzes the polymerization of single monomer units of UDP-N-acetylglucosamine to produce the linear homomer poly-beta-1,6-N-acetyl-D-glucosamine (PNAG, also referred to as PIA), a biofilm adhesin polysaccharide. Requires IcaD for full activity. In Staphylococcus epidermidis (strain ATCC 35984 / DSM 28319 / BCRC 17069 / CCUG 31568 / BM 3577 / RP62A), this protein is Poly-beta-1,6-N-acetyl-D-glucosamine synthase (icaA).